The primary structure comprises 853 residues: Guanine nucleotide exchange protein smcr8a (853 aa).

The uDENN FLCN/SMCR8-type domain occupies 47–219 (TSYAKFSKDF…KETELQKMNN (173 aa)). 2 disordered regions span residues 272 to 298 (PVMD…SRKS) and 418 to 454 (LKPG…SFSS). Over residues 280-298 (DTNPSDSAENTVETESRKS) the composition is skewed to polar residues. The region spanning 316–753 (RLKTLEELCD…LISHLADHRT (438 aa)) is the cDENN FLCN/SMCR8-type domain. Residues 421–432 (GVESGEGPPESS) show a composition bias toward low complexity. The segment covering 433 to 454 (TSDITQETSEAADTETKGSFSS) has biased composition (polar residues). A dDENN FLCN/SMCR8-type domain is found at 762-826 (FLHIQGMLTQ…IIQYLSELIK (65 aa)).

Belongs to the SMCR8 family. In terms of assembly, component of the C9orf72-SMCR8 complex. The C9orf72-SMCR8 complex associates with the ATG1/ULK1 kinase complex.

The protein resides in the cytoplasm. It is found in the nucleus. In terms of biological role, component of the C9orf72-SMCR8 complex, a complex that has guanine nucleotide exchange factor (GEF) activity and regulates autophagy. In the complex, C9orf72 and SMCR8 probably constitute the catalytic subunits that promote the exchange of GDP to GTP, converting inactive GDP-bound RAB8A and RAB39B into their active GTP-bound form, thereby promoting autophagosome maturation. The C9orf72-SMCR8 complex also acts as a negative regulator of autophagy initiation by interacting with the ATG1/ULK1 kinase complex and inhibiting its protein kinase activity. This chain is Guanine nucleotide exchange protein smcr8a (smcr8a), found in Danio rerio (Zebrafish).